The primary structure comprises 529 residues: Probable E3 ubiquitin-protein ligase MGRN1 (529 aa).

Residues 275–314 form an RING-type zinc finger; sequence ECVVCLSDLRDTLILPCRHLCLCNACADTLRYQANNCPIC. Disordered stretches follow at residues 341 to 362 and 396 to 529; these read SPVL…IPPG and EMGD…VEEC. Composition is skewed to polar residues over residues 449–463 and 477–487; these read AQPQ…SPSE and NSGSESRSLGV. Residues 501–511 show a composition bias toward low complexity; that stretch reads SSLSQSESDPS. The span at 520–529 shows a compositional bias: polar residues; sequence ESWSTAVEEC.

In terms of processing, autoubiquitinated in vitro.

The enzyme catalyses S-ubiquitinyl-[E2 ubiquitin-conjugating enzyme]-L-cysteine + [acceptor protein]-L-lysine = [E2 ubiquitin-conjugating enzyme]-L-cysteine + N(6)-ubiquitinyl-[acceptor protein]-L-lysine.. Its pathway is protein modification; protein ubiquitination. Its function is as follows. E3 ubiquitin-protein ligase. Also acts as a negative regulator of hedgehog signaling. The chain is Probable E3 ubiquitin-protein ligase MGRN1 (mgrn1) from Danio rerio (Zebrafish).